Reading from the N-terminus, the 612-residue chain is MACPF domain-containing protein NSL1 (612 aa).

Residues 5–338 enclose the MACPF domain; that stretch reads NFTRLDAHSA…PPIEELHQFL (334 aa).

The protein belongs to the complement C6/C7/C8/C9 (TC 1.C.39) family.

Negatively controls the salicylic acid (SA)-mediated pathway of programmed cell death in plant immunity. The protein is MACPF domain-containing protein NSL1 (NSL1) of Arabidopsis thaliana (Mouse-ear cress).